The primary structure comprises 276 residues: NH(3)-dependent NAD(+) synthetase (276 aa).

Gly-43 to Ser-50 is an ATP binding site. Residue Asp-49 coordinates Mg(2+). Arg-146 serves as a coordination point for deamido-NAD(+). Thr-166 lines the ATP pocket. Residue Glu-171 participates in Mg(2+) binding. 2 residues coordinate deamido-NAD(+): Lys-179 and Asp-186. Residues Lys-195 and Thr-217 each coordinate ATP. Residue His-266 to Lys-267 participates in deamido-NAD(+) binding.

This sequence belongs to the NAD synthetase family. Homodimer.

The enzyme catalyses deamido-NAD(+) + NH4(+) + ATP = AMP + diphosphate + NAD(+) + H(+). The protein operates within cofactor biosynthesis; NAD(+) biosynthesis; NAD(+) from deamido-NAD(+) (ammonia route): step 1/1. Functionally, catalyzes the ATP-dependent amidation of deamido-NAD to form NAD. Uses ammonia as a nitrogen source. The polypeptide is NH(3)-dependent NAD(+) synthetase (Aliivibrio fischeri (strain MJ11) (Vibrio fischeri)).